The chain runs to 1031 residues: Translation initiation factor IF-2 (1031 aa).

Disordered stretches follow at residues 33 to 369 (KSHS…GDVL) and 388 to 436 (LKPL…AESL). Over residues 45–56 (ELVRSKLSEPRV) the composition is skewed to basic and acidic residues. The segment covering 96–105 (PAPAQQQAAA) has biased composition (low complexity). The segment covering 108–123 (ASSSKPSPQRPDQLSS) has biased composition (polar residues). Over residues 148-171 (PAAQEPQPAAASTRPEAAAKAGSP) the composition is skewed to low complexity. Positions 184–200 (VLPPPRRAASGPEPPQR) are enriched in pro residues. The span at 250–281 (TRPEPRSPVAKKEESSDSGKADEAPRPQRRLE) shows a compositional bias: basic and acidic residues. Positions 286–299 (PTRPVAKPLPPEPD) are enriched in pro residues. Residues 419–435 (RPSASAEATAPEAAAES) are compositionally biased toward low complexity. The tr-type G domain occupies 522 to 695 (PRPPVVTIMG…LLVADVAELQ (174 aa)). The interval 531 to 538 (GHVDHGKT) is G1. Position 531–538 (531–538 (GHVDHGKT)) interacts with GTP. Residues 556–560 (GITQR) form a G2 region. A G3 region spans residues 581 to 584 (DTPG). Residues 581–585 (DTPGH) and 635–638 (NKID) each bind GTP. The segment at 635–638 (NKID) is G4. Positions 671-673 (SAL) are G5.

Belongs to the TRAFAC class translation factor GTPase superfamily. Classic translation factor GTPase family. IF-2 subfamily.

The protein localises to the cytoplasm. One of the essential components for the initiation of protein synthesis. Protects formylmethionyl-tRNA from spontaneous hydrolysis and promotes its binding to the 30S ribosomal subunits. Also involved in the hydrolysis of GTP during the formation of the 70S ribosomal complex. This Synechococcus sp. (strain JA-3-3Ab) (Cyanobacteria bacterium Yellowstone A-Prime) protein is Translation initiation factor IF-2.